We begin with the raw amino-acid sequence, 209 residues long: PF03932 family protein CutC (209 aa).

It is found in the cytoplasm. This is PF03932 family protein CutC from Streptococcus pyogenes serotype M6 (strain ATCC BAA-946 / MGAS10394).